A 924-amino-acid polypeptide reads, in one-letter code: Lon protease homolog 3, mitochondrial (924 aa).

The N-terminal 63 residues, 1 to 63 (MMPKRFNTSG…PVQSLLLFRA (63 aa)), are a transit peptide targeting the mitochondrion. The 214-residue stretch at 112–325 (VIALPLPHKP…LTLELVKKQV (214 aa)) folds into the Lon N-terminal domain. 447–454 (GPPGVGKT) is a binding site for ATP. In terms of domain architecture, Lon proteolytic spans 738–922 (QTPVGVVMGL…EKIFDLAFNY (185 aa)). Catalysis depends on residues Ser-828 and Lys-871.

This sequence belongs to the peptidase S16 family. As to quaternary structure, homohexamer or homoheptamer. Organized in a ring with a central cavity.

The protein localises to the mitochondrion matrix. It catalyses the reaction Hydrolysis of proteins in presence of ATP.. Its function is as follows. ATP-dependent serine protease that mediates the selective degradation of misfolded, unassembled or oxidatively damaged polypeptides as well as certain short-lived regulatory proteins in the mitochondrial matrix. May also have a chaperone function in the assembly of inner membrane protein complexes. Participates in the regulation of mitochondrial gene expression and in the maintenance of the integrity of the mitochondrial genome. Binds to mitochondrial DNA in a site-specific manner. This Arabidopsis thaliana (Mouse-ear cress) protein is Lon protease homolog 3, mitochondrial (LON3).